The following is a 97-amino-acid chain: Scorpine-like peptide Ev37 (97 aa).

Positions 1–19 (MNSKLTVIVLLALITIASC) are cleaved as a signal peptide. Residues 55–95 (QNLCAFNVDTVGMCDADCKRQGKAKGVCHGTKCKCDVELSY) enclose the BetaSPN-type CS-alpha/beta domain. Disulfide bonds link Cys58–Cys82, Cys68–Cys87, and Cys72–Cys89.

It belongs to the long chain scorpion toxin family. Class 3 subfamily. As to expression, expressed by the venom gland.

It localises to the secreted. Its function is as follows. Selectively inhibits Kv1.3/KCNA3 channel (IC(50)=0.95 uM). Both N-terminal and C-terminal domains are likely involved in the interaction with Kv1.3/KCNA3, since neither its N-terminal domain (1-36) nor its C-terminal domain (37-78) block Kv1.3/KCNA3 channel. The chain is Scorpine-like peptide Ev37 from Euscorpiops validus (Scorpion).